Here is a 217-residue protein sequence, read N- to C-terminus: Growth factor receptor-bound protein 2 (217 aa).

The residue at position 1 (Met-1) is an N-acetylmethionine. One can recognise an SH3 1 domain in the interval 1 to 58; it reads MEAIAKYDFKATADDELSFKRGDILKVLNEECDQNWYKAELNGKDGFIPKNYIEMKPH. Lys-6, Lys-50, and Lys-109 each carry N6-acetyllysine. In terms of domain architecture, SH2 spans 60–152; it reads WFFGKIPRAK…NQQIFLRDIE (93 aa). A Glycyl lysine isopeptide (Lys-Gly) (interchain with G-Cter in ubiquitin) cross-link involves residue Lys-109. The region spanning 156-215 is the SH3 2 domain; the sequence is QQPTYVQALFDFDPQEDGELGFRRGDFIHVMDNSDPNWWKGACHGQTGMFPRNYVTPVNR. At Tyr-209 the chain carries Phosphotyrosine. Phosphothreonine is present on Thr-211.

Belongs to the GRB2/sem-5/DRK family. As to quaternary structure, associates (via SH2 domain) with activated EGF and PDGF receptors (tyrosine phosphorylated). Interacts with PDGFRA (tyrosine phosphorylated); the interaction may be indirect. Interacts with IRS4 (when Tyr-phosphorylated). Also associates to other cellular Tyr-phosphorylated proteins such as SIT1, IRS1, IRS2, SHC and LNK; probably via the concerted action of both its SH2 and SH3 domains. It also seems to interact with RAS in the signaling pathway leading to DNA synthesis. Interacts with SOS1. Forms a complex with MUC1 and SOS1, through interaction of the SH3 domains with SOS1 and the SH2 domain with phosphorylated MUC1. Interacts with phosphorylated MET. Interacts with phosphorylated TOM1L1. Interacts with the phosphorylated C-terminus of SH2B2. Interacts with phosphorylated SIT1, LAX1, LAT, LAT2 and LIME1 upon TCR and/or BCR activation. Interacts with NISCH, PTPNS1 and REPS2. Interacts with syntrophin SNTA1. Interacts (via SH3 domains) with REPS1. Interacts (via SH3 domains) with PIK3C2B. Interacts with CBL and CBLB. Interacts with AJUBA and CLNK. Interacts (via SH2 domain) with TEK/TIE2 (tyrosine phosphorylated). Interacts with SHB, INPP5D/SHIP1, SKAP1 and SKAP2. Interacts with PTPN11. Interacts with PRNP. Interacts with RALGPS1. Also interacts with HCST. Interacts with KDR. Interacts with FLT1 (tyrosine-phosphorylated). Interacts with GAPT and PTPRE. Interacts (via SH2 domain) with KIF26A. Interacts (via SH3 2) with GAB2. Interacts with ADAM15. Interacts with THEMIS2. Interacts (via SH2 domain) with AXL (phosphorylated). Interacts (via SH2 domain) with KIT (phosphorylated). Interacts with PTPRJ and BCR. Interacts with PTPN23. Interacts with FLT4 (tyrosine phosphorylated). Interacts with EPHB1 and SHC1; activates the MAPK/ERK cascade to regulate cell migration. Part of a complex including TNK2, GRB2 and one receptor tyrosine kinase (RTK) such as AXL and PDGFRL, in which GRB2 promotes RTK recruitment by TNK2. Interacts (via SH2 domain) with CSF1R (tyrosine phosphorylated). Interacts with ERBB4. Interacts with NTRK1 (phosphorylated upon ligand-binding). Interacts with PTK2/FAK1 (tyrosine phosphorylated). Interacts with PTK2B/PYK2 (tyrosine phosphorylated). Interacts (via SH2-domain) with SCIMP; this interaction is dependent on phosphorylation of SCIMP 'Tyr-58'. Interacts (via SH3 domains) with GAREM1 (via proline-rich domain and tyrosine phosphorylated); the interaction occurs upon EGF stimulation. Interacts with DAB2. Interacts with TESPA1. Interacts with THEMIS. Interacts with PLCG1, LAT and THEMIS upon TCR activation in thymocytes; the association is weaker in the absence of TESPA1. Interacts with CD28. Interacts with RAB13; may recruit RAB13 to the leading edge of migrating endothelial cells where it can activate RHOA. Interacts with ASAP3 (phosphorylated form). Interacts (via SH2 domain) with PTPRH (phosphorylated form). Interacts with PTPRO (phosphorylated form). Interacts with PTPRB (phosphorylated form). Interacts (via SH3 domain 2) with PRR14 (via proline-rich region). Interacts with DENND2B. Interacts with SPRY2. Interacts with LRRC8A. Interacts with PEAK1. Interacts with FCRL1. Interacts with PCNA. Interacts with CD19. Interacts with BECN1. Interacts with RAD51; the interaction inhibits RAD51 ATPase to stabilize RAD51-DNA complex at stalled replication forks. Interacts with MRE11; this interaction recruits MRE11 to the DNA damage sites. Interacts with RIPK1 ans SQSTM1; these interactions play a critical role in regulating programmed necrosis. Interacts with AGO2; this interaction is important for the formation of a ternary complex containing GRB2, AGO2 and DICER1. Interacts with TIGIT; this interaction inhibits PI3K and MAPK signaling cascades. Interacts with CD226; this interaction leads to activation of VAV1, PI3K and PLCG1. In terms of assembly, interacts with SOS1; this interaction competes with GRB2 to bind SOS1 via its N-terminal SH3 domain. Post-translationally, phosphorylation of Tyr-209 in the C-terminal SH3 domain reduces its binding to SOS1. In terms of processing, ubiquitinated by RNF173, leading to proteasomal degradation and inhibition of the RAF/MEK/ERK pathway. In the nucleus, polyubiquitinated by RBBP6 at Lys-109 at DNA damage sites. Expressed in macrophages.

It localises to the nucleus. The protein resides in the cytoplasm. The protein localises to the endosome. Its subcellular location is the golgi apparatus. In terms of biological role, non-enzymatic adapter protein that plays a pivotal role in precisely regulated signaling cascades from cell surface receptors to cellular responses, including signaling transduction and gene expression. Thus, participates in many biological processes including regulation of innate and adaptive immunity, autophagy, DNA repair or necroptosis. Controls signaling complexes at the T-cell antigen receptor to facilitate the activation, differentiation, and function of T-cells. Mechanistically, engagement of the TCR leads to phosphorylation of the adapter protein LAT, which serves as docking site for GRB2. In turn, GRB2 establishes a a connection with SOS1 that acts as a guanine nucleotide exchange factor and serves as a critical regulator of KRAS/RAF1 leading to MAPKs translocation to the nucleus and activation. Also functions a role in B-cell activation by amplifying Ca(2+) mobilization and activation of the ERK MAP kinase pathway upon recruitment to the phosphorylated B-cell antigen receptor (BCR). Plays a role in switching between autophagy and programmed necrosis upstream of EGFR by interacting with components of necrosomes including RIPK1 and with autophagy regulators SQSTM1 and BECN1. Regulates miRNA biogenesis by forming a functional ternary complex with AGO2 and DICER1. Functions in the replication stress response by protecting DNA at stalled replication forks from MRE11-mediated degradation. Mechanistically, inhibits RAD51 ATPase activity to stabilize RAD51 on stalled replication forks. Additionally, directly recruits and later releases MRE11 at DNA damage sites during the homology-directed repair (HDR) process. Its function is as follows. Does not bind to phosphorylated epidermal growth factor receptor (EGFR) but inhibits EGF-induced transactivation of a RAS-responsive element. Acts as a dominant negative protein over GRB2 and by suppressing proliferative signals, may trigger active programmed cell death. Mechanistically, inhibits RAS-ERK signaling and downstream cell proliferation by competing with GRB2 for SOS1 binding and thus by regulating SOS1 membrane recruitment. The protein is Growth factor receptor-bound protein 2 (Grb2) of Mus musculus (Mouse).